The following is a 328-amino-acid chain: DNA-directed RNA polymerase subunit alpha 2 (328 aa).

The segment at Met-1–Arg-234 is alpha N-terminal domain (alpha-NTD). Residues Phe-248–Asp-328 form an alpha C-terminal domain (alpha-CTD) region.

This sequence belongs to the RNA polymerase alpha chain family. As to quaternary structure, homodimer. The RNAP catalytic core consists of 2 alpha, 1 beta, 1 beta' and 1 omega subunit. When a sigma factor is associated with the core the holoenzyme is formed, which can initiate transcription.

The catalysed reaction is RNA(n) + a ribonucleoside 5'-triphosphate = RNA(n+1) + diphosphate. Its function is as follows. DNA-dependent RNA polymerase catalyzes the transcription of DNA into RNA using the four ribonucleoside triphosphates as substrates. The protein is DNA-directed RNA polymerase subunit alpha 2 of Psychromonas ingrahamii (strain DSM 17664 / CCUG 51855 / 37).